A 691-amino-acid chain; its full sequence is 1-butanol dehydrogenase (cytochrome c) (691 aa).

Residues Met1–Ala38 form the signal peptide. Pyrroloquinoline quinone is bound at residue Glu84. Cys130 and Cys131 are joined by a disulfide. Pyrroloquinoline quinone contacts are provided by residues Arg136, Thr181, and Gly197–Ala198. The Ca(2+) site is built by Glu199 and Asp322. Asp322 acts as the Proton acceptor in catalysis. Residues Lys349, Asn408 to Trp409, and Val558 contribute to the pyrroloquinoline quinone site. Residues Asp605 to Ala684 form the Cytochrome c domain. Heme c contacts are provided by Cys618, Cys621, His622, and Met661.

Belongs to the bacterial PQQ dehydrogenase family. As to quaternary structure, monomer. Pyrroloquinoline quinone is required as a cofactor. Requires Ca(2+) as cofactor. It depends on heme c as a cofactor.

The protein resides in the periplasm. The catalysed reaction is butan-1-ol + 2 Fe(III)-[cytochrome c] = butanal + 2 Fe(II)-[cytochrome c] + 2 H(+). Dehydrogenase activity is increased by ammonium ions. In terms of biological role, involved in the metabolism of butane. Could be important in the detoxification of 1-butanol. Catalyzes the oxidation of 1-butanol to butyraldehyde. Also able to use 1-propanol, 2-pentanol, propionaldehyde and butyraldehyde as substrates. The polypeptide is 1-butanol dehydrogenase (cytochrome c) (Thauera butanivorans (strain ATCC 43655 / DSM 2080 / JCM 20651 / CCUG 51053 / NBRC 103042 / IAM 12574 / Bu B1211) (Pseudomonas butanovora)).